The sequence spans 347 residues: tRNA N6-adenosine threonylcarbamoyltransferase (347 aa).

Residues histidine 111 and histidine 115 each contribute to the Fe cation site. Residues 134 to 138 (LVSGG), aspartate 167, glycine 180, and asparagine 277 contribute to the substrate site. Aspartate 305 contributes to the Fe cation binding site.

The protein belongs to the KAE1 / TsaD family. It depends on Fe(2+) as a cofactor.

It is found in the cytoplasm. It catalyses the reaction L-threonylcarbamoyladenylate + adenosine(37) in tRNA = N(6)-L-threonylcarbamoyladenosine(37) in tRNA + AMP + H(+). Functionally, required for the formation of a threonylcarbamoyl group on adenosine at position 37 (t(6)A37) in tRNAs that read codons beginning with adenine. Is involved in the transfer of the threonylcarbamoyl moiety of threonylcarbamoyl-AMP (TC-AMP) to the N6 group of A37, together with TsaE and TsaB. TsaD likely plays a direct catalytic role in this reaction. The chain is tRNA N6-adenosine threonylcarbamoyltransferase from Ralstonia pickettii (strain 12J).